We begin with the raw amino-acid sequence, 261 residues long: Hemin import ATP-binding protein HmuV (261 aa).

Residues 5-241 (LTANAASFAI…DLLARVFDVD (237 aa)) enclose the ABC transporter domain. ATP is bound at residue 37–44 (GPNGAGKS).

Belongs to the ABC transporter superfamily. Heme (hemin) importer (TC 3.A.1.14.5) family. In terms of assembly, the complex is composed of two ATP-binding proteins (HmuV), two transmembrane proteins (HmuU) and a solute-binding protein (HmuT).

The protein localises to the cell inner membrane. Functionally, part of the ABC transporter complex HmuTUV involved in hemin import. Responsible for energy coupling to the transport system. In Rhodopseudomonas palustris (strain BisB5), this protein is Hemin import ATP-binding protein HmuV.